Reading from the N-terminus, the 71-residue chain is Large ribosomal subunit protein bL31 (71 aa).

The Zn(2+) site is built by Cys16, Cys18, Cys37, and Cys40.

The protein belongs to the bacterial ribosomal protein bL31 family. Type A subfamily. In terms of assembly, part of the 50S ribosomal subunit. Zn(2+) is required as a cofactor.

In terms of biological role, binds the 23S rRNA. This is Large ribosomal subunit protein bL31 from Yersinia pseudotuberculosis serotype O:1b (strain IP 31758).